Here is a 47-residue protein sequence, read N- to C-terminus: Large ribosomal subunit protein bL34 (47 aa).

This sequence belongs to the bacterial ribosomal protein bL34 family.

This Mycolicibacterium smegmatis (strain ATCC 700084 / mc(2)155) (Mycobacterium smegmatis) protein is Large ribosomal subunit protein bL34 (rpmH).